The sequence spans 387 residues: MGESLSPQALAQPLLLQLFVDTRPLSQHIVQRVKNILAAVEATVPISLQVINVADQPQLVEYYRLVVTPALVKIGPGSRQVLSGIDLTDQLANQLPQWLVQQEAFFADREPPEVNIPFTELGQPETPALQQADAFFQLQQQYADLSERTKFLEQVIALVAHDLRNPLTAALLAVDTIQIRSQSFSVATAKEMQGLCSLFDQARSQLREIERMIAEILEATRHSGESLRINPREVVFEPLLQQVLEQLHERWRSKQQQLITDVPGDLPTLYADPDRLRQVLVNLLDNAIKYTPPGGTITIAALHRTSQKVQISISDTGSGIPRDQLSVIFKNLVRLSRDSSQEGYGIGLSVCQRIVQAHFGRIWVASELGQGSTFHFTMPVYRYTMPC.

The segment at 1–97 (MGESLSPQAL…TDQLANQLPQ (97 aa)) is interacts with KaiC. The 225-residue stretch at 158-382 (LVAHDLRNPL…TFHFTMPVYR (225 aa)) folds into the Histidine kinase domain. At His-161 the chain carries Phosphohistidine; by autocatalysis.

Homooligomerizes. Part of the circadian clock (KaiA, KaiB, KaiC, CikA, RpaA, SasA), the composition of which varies during the circadian cycle. Binds to the CI domain of KaiC; KaiB(fs) and SasA compete for the binding site. Binds preferentially to doubly phosphorylated KaiC. Interacts with LdpA. In terms of processing, autophosphorylates in vitro.

The catalysed reaction is ATP + protein L-histidine = ADP + protein N-phospho-L-histidine.. Member of the two-component regulatory system SasA/RpaA involved in genome-wide circadian gene expression. One of three clock output pathways. Participates in the KaiABC clock protein complex, which constitutes the main circadian regulator in cyanobacteria, via its interaction with KaiC. Required for robustness of the circadian rhythm of gene expression and involved in clock output. KaiC enhances the autophosphorylation activity of SasA, which then transfers its phosphate group to RpaA to activate it. Phosphotransfer is maximal when KaiC phosphorylation is active during the circadian cycle; this two-component system is activated by fully phosphorylated KaiC. A very robust clock is reconstituted with KaiA, KaiB, KaiC, SasA, CikA and RpaA; output is measured by transcription from an appropriate reporter. In addition to its output function, recruits fold-shifted KaiB (KaiB(fs)) to KaiC to cooperatively form the KaiB(6):KaiC(6) complex (independent of SasA kinase activity); at physiological concentrations increases their association. At higher concentrations SasA and KaiB(fs) compete to bind to KaiC. Mutations that decrease cooperativity nearly phenocopy a deletion mutation. Its function is as follows. Autophosphorylation and phosphotransfer activities are not essential for clock rhythms in continuous light, but they are essential for adaptation to light/dark cycles. The sequence is that of Adaptive-response sensory kinase SasA from Synechococcus elongatus (strain ATCC 33912 / PCC 7942 / FACHB-805) (Anacystis nidulans R2).